The sequence spans 593 residues: MTADNAIFIPPYKADDQDVVVELNNRFGAEAFVAQETRTGMPVLWVKRAQLKEVLSFLRGVAKPYSMLYDLHGVDERLRTQRRGLPAADFSVFYHLLSVERNSDVMIKVSLSEGDLNLPTVTGIWPNANWYEREVWDMFGIDFAGHPHLSRIMMPPTWEGHPLRKDYPARATEFDPYSLTLAKQQLEEESARFNPEAWGMKRQGANEDYMFLNLGPNHPSAHGAFRIVLQLDGEEIVDCVPDIGYHHRGAEKMAERQSWHSFIPYTDRIDYLGGVMNNLPYVLAVEKLAGIKVPQKVDVIRIMLAEFFRITSHLLFLGTYIQDVGAMTPVFFTFTDRQRAYTVIEAITGFRLHPAWYRIGGVAHDLPRGWDKLVKDFVEWLPKRLDEYTKAALQNSILKGRTIGVAAYNTKEALEWGTTGAGLRSTGCDFDLRKARPYSGYENFEFEVPLAHNGDAYDRCMVRVEEMRQSIRIIDQCLRNMPEGPYKADHPLTTPPPKERTLQHIETLITHFLQVSWGPVMPANESFQMIEATKGINSYYLTSDGGTMSYRTRIRTPSYPHLQQIPSVIKGSMVADLIAYLGSIDFVMADVDR.

The NADH dehydrogenase I subunit C stretch occupies residues 1 to 184 (MTADNAIFIP…DPYSLTLAKQ (184 aa)). The segment at 208-593 (DYMFLNLGPN…IDFVMADVDR (386 aa)) is NADH dehydrogenase I subunit D.

It in the N-terminal section; belongs to the complex I 30 kDa subunit family. In the C-terminal section; belongs to the complex I 49 kDa subunit family. As to quaternary structure, NDH-1 is composed of 13 different subunits. Subunits NuoB, CD, E, F, and G constitute the peripheral sector of the complex.

Its subcellular location is the cell inner membrane. It catalyses the reaction a quinone + NADH + 5 H(+)(in) = a quinol + NAD(+) + 4 H(+)(out). NDH-1 shuttles electrons from NADH, via FMN and iron-sulfur (Fe-S) centers, to quinones in the respiratory chain. The immediate electron acceptor for the enzyme in this species is believed to be ubiquinone. Couples the redox reaction to proton translocation (for every two electrons transferred, four hydrogen ions are translocated across the cytoplasmic membrane), and thus conserves the redox energy in a proton gradient. In Pseudomonas putida (strain GB-1), this protein is NADH-quinone oxidoreductase subunit C/D.